Here is a 157-residue protein sequence, read N- to C-terminus: Endoribonuclease YbeY (157 aa).

Residues His-111, His-115, and His-121 each coordinate Zn(2+).

It belongs to the endoribonuclease YbeY family. Zn(2+) is required as a cofactor.

It localises to the cytoplasm. In terms of biological role, single strand-specific metallo-endoribonuclease involved in late-stage 70S ribosome quality control and in maturation of the 3' terminus of the 16S rRNA. This Pseudomonas putida (strain W619) protein is Endoribonuclease YbeY.